Here is a 226-residue protein sequence, read N- to C-terminus: MKAIKIAIDGPASSGKSTVAKIIAKNLGYTYLDTGAMYRSATYIALTHGYTDKEVALILEELEKNPISFKKAKDGSQLVFLGDEDVTLVIRQNDVTNNVSWVSALPEIREELVHQQRRIAQAGGIIMDGRDIGTVVLPDAELKIFLVASVEERAERRYKENLEKGIESDFETLKEEIAARDYKDSHRKVSPLKAAEDALIFDTTGVSIDGVVQFIQEKAEKIVDMS.

An ATP-binding site is contributed by glycine 10–threonine 18.

The protein localises to the cytoplasm. The enzyme catalyses CMP + ATP = CDP + ADP. It catalyses the reaction dCMP + ATP = dCDP + ADP. The chain is Cytidylate kinase from Streptococcus pyogenes serotype M6 (strain ATCC BAA-946 / MGAS10394).